A 76-amino-acid chain; its full sequence is UPF0248 protein MmarC7_1289 (76 aa).

Belongs to the UPF0248 family.

This is UPF0248 protein MmarC7_1289 from Methanococcus maripaludis (strain C7 / ATCC BAA-1331).